The following is a 147-amino-acid chain: Large ribosomal subunit protein uL15 (147 aa).

The segment at 1–42 is disordered; sequence MTIKLHHLRPAPGAKTDKTRVGRGEGSKGKTAGRGTKGTKAR. Residues 15–28 are compositionally biased toward basic and acidic residues; the sequence is KTDKTRVGRGEGSK.

This sequence belongs to the universal ribosomal protein uL15 family. As to quaternary structure, part of the 50S ribosomal subunit.

Its function is as follows. Binds to the 23S rRNA. The polypeptide is Large ribosomal subunit protein uL15 (Nocardia farcinica (strain IFM 10152)).